The sequence spans 526 residues: Peptide chain release factor 3 (526 aa).

The region spanning 8 to 277 (NKRRTFAIIS…GLTEWAPKPQ (270 aa)) is the tr-type G domain. GTP contacts are provided by residues 17 to 24 (SHPDAGKT), 85 to 89 (DTPGH), and 139 to 142 (NKLD).

Belongs to the TRAFAC class translation factor GTPase superfamily. Classic translation factor GTPase family. PrfC subfamily.

It is found in the cytoplasm. Functionally, increases the formation of ribosomal termination complexes and stimulates activities of RF-1 and RF-2. It binds guanine nucleotides and has strong preference for UGA stop codons. It may interact directly with the ribosome. The stimulation of RF-1 and RF-2 is significantly reduced by GTP and GDP, but not by GMP. In Actinobacillus pleuropneumoniae serotype 5b (strain L20), this protein is Peptide chain release factor 3.